The following is a 1247-amino-acid chain: ABC transporter B family member 14 (1247 aa).

The ABC transmembrane type-1 1 domain occupies 48–337; sequence MFLGGLGTCI…AVPSLSAISK (290 aa). 6 consecutive transmembrane segments (helical) span residues 49-69, 95-115, 172-192, 196-216, 277-297, and 315-335; these read FLGG…FVFF, LYLV…VACW, HVLR…LSVW, LLTL…AIVM, LGVG…FWYA, and ILNV…LSAI. N-linked (GlcNAc...) asparagine glycosylation is found at Asn-362 and Asn-392. The ABC transporter 1 domain maps to 373–608; the sequence is IEFCGVSFAY…GGDYATLVNC (236 aa). 407 to 414 is a binding site for ATP; that stretch reads GPSGSGKS. The region spanning 679–971 is the ABC transmembrane type-1 2 domain; it reads EWLYALLGSI…TLALTPDIVK (293 aa). The next 2 helical transmembrane spans lie at 680 to 700 and 727 to 747; these read WLYA…PALF and AIIF…QHYF. Asn-780 is a glycosylation site (N-linked (GlcNAc...) asparagine). The next 3 helical transmembrane spans lie at 807–824, 830–850, and 915–935; these read IVQN…AFFY, AVVT…QLFL, and LSQC…SVLI. N-linked (GlcNAc...) asparagine glycosylation is present at Asn-938. A helical transmembrane segment spans residues 949 to 969; that stretch reads FMVLLVTAYSVAETLALTPDI. The ABC transporter 2 domain maps to 1006–1242; that stretch reads IEFRNVSFAY…SDGFYKKLTS (237 aa). N-linked (GlcNAc...) asparagine glycosylation occurs at Asn-1010. ATP is bound at residue 1041 to 1048; the sequence is GPSGSGKS. N-linked (GlcNAc...) asparagine glycosylation is present at Asn-1108.

This sequence belongs to the ABC transporter superfamily. ABCB family. Multidrug resistance exporter (TC 3.A.1.201) subfamily.

It localises to the membrane. This chain is ABC transporter B family member 14 (ABCB14), found in Arabidopsis thaliana (Mouse-ear cress).